Reading from the N-terminus, the 182-residue chain is UPF0397 protein SPG_0438 (182 aa).

5 helical membrane-spanning segments follow: residues Val10 to Thr30, Leu46 to Ile66, Tyr73 to Phe93, Ile109 to Pro129, and Ile148 to Ala168.

The protein belongs to the UPF0397 family.

Its subcellular location is the cell membrane. This chain is UPF0397 protein SPG_0438, found in Streptococcus pneumoniae serotype 19F (strain G54).